The chain runs to 542 residues: MQTSAMALLARILRAGLRPAPERGGLLGGGAPRRPQPAGARLPAGARAEDKGAGRPGSPPGGGRAEGPRSLAAMPGPRTLANLAEFFCRDGFSRIHEIQQKHTREYGKIFKSHFGPQFVVSIADRDMVAQVLRAEGAAPQRANMESWREYRDLRGRATGLISAEGEQWLKMRSVLRQRILKPKDVAIYSGEVNQVIADLIKRIYLLRSQAEDGETVTNVNDLFFKYSMEGVATILYESRLGCLENSIPQLTVEYIEALELMFSMFKTSMYAGAIPRWLRPFIPKPWREFCRSWDGLFKFSQIHVDNKLRDIQYQMDRGRRVSGGLLTYLFLSQALTLQEIYANVTEMLLAGVDTTSFTLSWTVYLLARHPEVQQTVYREIVKNLGERHVPTAADVPKVPLVRALLKETLRLFPVLPGNGRVTQEDLVIGGYLIPKGTQLALCHYATSYQDENFPRAKEFRPERWLRKGDLDRVDNFGSIPFGHGVRSCIGRRIAELEIHLVVIQLLQHFEIKTSSQTNAVHAKTHGLLTPGGPIHVRFVNRK.

The transit peptide at M1–L80 directs the protein to the mitochondrion. The tract at residues A20–P75 is disordered. Low complexity predominate over residues P32 to A46. Heme is bound at residue C488.

Belongs to the cytochrome P450 family. Heme serves as cofactor. As to expression, widely expressed, with highest levels in the liver, kidney and pancreas. Expressed in the skin (at protein level).

The protein resides in the mitochondrion membrane. The enzyme catalyses all-trans-retinol + 2 reduced [adrenodoxin] + O2 + 2 H(+) = all-trans-3,4-didehydroretinol + 2 oxidized [adrenodoxin] + 2 H2O. It carries out the reaction all-trans-retinol + 2 reduced [adrenodoxin] + O2 + 2 H(+) = all-trans-4-hydroxyretinol + 2 oxidized [adrenodoxin] + H2O. It catalyses the reaction all-trans-retinol + 2 reduced [adrenodoxin] + O2 + 2 H(+) = all-trans-3-hydroxyretinol + 2 oxidized [adrenodoxin] + H2O. It functions in the pathway cofactor metabolism; retinol metabolism. A cytochrome P450 monooxygenase that catalyzes the 3,4 desaturation of all-trans-retinol (also called vitamin A1) to all-trans-3,4-didehydroretinol (also called vitamin A2) in the skin. Desaturates with lower efficiency all-trans retinal and all-trans retinoic acid. Forms minor amounts of 3-hydroxy and 4-hydroxy all-trans-retinol derivatives. Mechanistically, uses molecular oxygen inserting one oxygen atom into a substrate and reducing the second into a water molecule. Two electrons are provided by NADPH via a two-protein mitochondrial transfer system comprising flavoprotein FDXR (adrenodoxin/ferredoxin reductase) and nonheme iron-sulfur protein FDX1 or FDX2 (adrenodoxin/ferredoxin). In Homo sapiens (Human), this protein is Cytochrome P450 27C1.